The primary structure comprises 242 residues: Probable transcriptional regulatory protein Cphy_2507 (242 aa).

Belongs to the TACO1 family.

Its subcellular location is the cytoplasm. This is Probable transcriptional regulatory protein Cphy_2507 from Lachnoclostridium phytofermentans (strain ATCC 700394 / DSM 18823 / ISDg) (Clostridium phytofermentans).